We begin with the raw amino-acid sequence, 471 residues long: Cleavage and polyadenylation specificity factor subunit 7 (471 aa).

Residues 34 to 68 are disordered; that stretch reads VLTAASQPSDDRSSSTEPPPPVRQEPAPKPNNKTP. Residues 50-62 show a composition bias toward pro residues; the sequence is EPPPPVRQEPAPK. The RRM domain maps to 82-162; that stretch reads AAVYVGSFSW…EKVDVRPATR (81 aa). The interval 176-220 is disordered; the sequence is ECVRVPRGGIPPRAHSRDSSDSADGRATPSENLVPSSARVDKPPS. A compositionally biased stretch (basic and acidic residues) spans 190–199; the sequence is HSRDSSDSAD. T203 is subject to Phosphothreonine. Residue S205 is modified to Phosphoserine. Residue K354 forms a Glycyl lysine isopeptide (Lys-Gly) (interchain with G-Cter in SUMO2) linkage. The tract at residues 409–471 is disordered; sequence SVGASGSSSR…HRDRERDRHH (63 aa). Phosphoserine occurs at positions 413 and 423. The tract at residues 418-469 is arg/Ser-rich domain; that stretch reads RKRHRSRERSPSRSRESSRRHRDLLHNEDRHDDYFQERNREHERHRDRERDR. Basic and acidic residues-rich tracts occupy residues 425 to 434 and 441 to 471; these read ERSPSRSRES and LLHN…DRHH.

It belongs to the RRM CPSF6/7 family. As to quaternary structure, component of the cleavage factor Im (CFIm) complex which is a heterotetramer composed of two subunits of NUDT21/CPSF5 and two subunits of CPSF6 or CPSF7 or a heterodimer of CPSF6 and CPSF7. The cleavage factor Im (CFIm) complex associates with the CPSF and CSTF complexes to promote the assembly of the core mRNA 3'-processing machinery. Interacts with NUDT21/CPSF5. Interacts (via Arg/Ser-rich domain) with FIP1L1 (preferentially via unphosphorylated form and Arg/Glu/Asp-rich region); this interaction mediates, at least in part, the interaction between the CFIm and CPSF complexes and may be inhibited by CPSF7 hyper-phosphorylation. Phosphorylated. In terms of processing, asymmetrically dimethylated on arginine residues by PRMT1.

Its subcellular location is the nucleus. The protein localises to the cytoplasm. Its function is as follows. Component of the cleavage factor Im (CFIm) complex that functions as an activator of the pre-mRNA 3'-end cleavage and polyadenylation processing required for the maturation of pre-mRNA into functional mRNAs. CFIm contributes to the recruitment of multiprotein complexes on specific sequences on the pre-mRNA 3'-end, so called cleavage and polyadenylation signals (pA signals). Most pre-mRNAs contain multiple pA signals, resulting in alternative cleavage and polyadenylation (APA) producing mRNAs with variable 3'-end formation. The CFIm complex acts as a key regulator of cleavage and polyadenylation site choice during APA through its binding to 5'-UGUA-3' elements localized in the 3'-untranslated region (UTR) for a huge number of pre-mRNAs. CPSF7 activates directly the mRNA 3'-processing machinery. Binds to pA signals in RNA substrates. This is Cleavage and polyadenylation specificity factor subunit 7 from Mus musculus (Mouse).